We begin with the raw amino-acid sequence, 443 residues long: Thymidine phosphorylase (443 aa).

Belongs to the thymidine/pyrimidine-nucleoside phosphorylase family. Homodimer.

It catalyses the reaction thymidine + phosphate = 2-deoxy-alpha-D-ribose 1-phosphate + thymine. The protein operates within pyrimidine metabolism; dTMP biosynthesis via salvage pathway; dTMP from thymine: step 1/2. The enzymes which catalyze the reversible phosphorolysis of pyrimidine nucleosides are involved in the degradation of these compounds and in their utilization as carbon and energy sources, or in the rescue of pyrimidine bases for nucleotide synthesis. This is Thymidine phosphorylase from Aeromonas salmonicida (strain A449).